We begin with the raw amino-acid sequence, 222 residues long: N-(5'-phosphoribosyl)anthranilate isomerase (222 aa).

The protein belongs to the TrpF family.

It carries out the reaction N-(5-phospho-beta-D-ribosyl)anthranilate = 1-(2-carboxyphenylamino)-1-deoxy-D-ribulose 5-phosphate. Its pathway is amino-acid biosynthesis; L-tryptophan biosynthesis; L-tryptophan from chorismate: step 3/5. The polypeptide is N-(5'-phosphoribosyl)anthranilate isomerase (Xanthomonas campestris pv. campestris (strain 8004)).